The primary structure comprises 289 residues: Protoheme IX farnesyltransferase 2 (289 aa).

9 consecutive transmembrane segments (helical) span residues 13–33 (LEITILIDIVAIAAFLAVPGS), 37–57 (IYDLLILIFAGTLASMSASIF), 86–106 (LFFIIATAMVLLSFVTSFILL), 109–129 (VTSAFILGGFASYVLLYTIIL), 137–157 (IVIGGIAGSFPALAGWASITG), 159–179 (VSATSLFIAFLVFMWTPTHFW), 207–227 (EFWIMVNTSILVIYSILPLFI), 232–252 (VGLLYMPMAAVMDALLIYYVA), and 267–287 (AFHFSNMYMLMLLIGIMLILV).

The protein belongs to the UbiA prenyltransferase family. Protoheme IX farnesyltransferase subfamily.

Its subcellular location is the cell membrane. The enzyme catalyses heme b + (2E,6E)-farnesyl diphosphate + H2O = Fe(II)-heme o + diphosphate. The protein operates within porphyrin-containing compound metabolism; heme O biosynthesis; heme O from protoheme: step 1/1. In terms of biological role, converts heme B (protoheme IX) to heme O by substitution of the vinyl group on carbon 2 of heme B porphyrin ring with a hydroxyethyl farnesyl side group. This chain is Protoheme IX farnesyltransferase 2, found in Picrophilus torridus (strain ATCC 700027 / DSM 9790 / JCM 10055 / NBRC 100828 / KAW 2/3).